The sequence spans 345 residues: 3-isopropylmalate dehydrogenase (345 aa).

NAD(+) is bound at residue 74-87 (GPKWDGLPRKISPE). The substrate site is built by Arg-94, Arg-104, Arg-132, and Asp-217. Mg(2+)-binding residues include Asp-217, Asp-241, and Asp-245. Position 274–286 (274–286 (GSAPDIAGKGIAN)) interacts with NAD(+).

This sequence belongs to the isocitrate and isopropylmalate dehydrogenases family. LeuB type 1 subfamily. Homodimer. Mg(2+) serves as cofactor. The cofactor is Mn(2+).

The protein localises to the cytoplasm. It catalyses the reaction (2R,3S)-3-isopropylmalate + NAD(+) = 4-methyl-2-oxopentanoate + CO2 + NADH. The protein operates within amino-acid biosynthesis; L-leucine biosynthesis; L-leucine from 3-methyl-2-oxobutanoate: step 3/4. Catalyzes the oxidation of 3-carboxy-2-hydroxy-4-methylpentanoate (3-isopropylmalate) to 3-carboxy-4-methyl-2-oxopentanoate. The product decarboxylates to 4-methyl-2 oxopentanoate. In Thermus thermophilus, this protein is 3-isopropylmalate dehydrogenase (leuB).